The chain runs to 259 residues: GDP-perosamine N-formyltransferase (259 aa).

(6S)-5,6,7,8-tetrahydrofolate-binding positions include 89-91 and 139-143; these read SLI and DENFD.

The protein belongs to the Fmt family. As to quaternary structure, homodimer.

The catalysed reaction is GDP-alpha-D-perosamine + (6R)-10-formyltetrahydrofolate = GDP-N-formyl-alpha-D-perosamine + (6S)-5,6,7,8-tetrahydrofolate + H(+). It participates in bacterial outer membrane biogenesis; lipopolysaccharide biosynthesis. Its function is as follows. Involved in the lipopolysaccharide (LPS) O-antigen biosynthesis. Catalyzes the transfer of a formyl group to GDP-perosamine, leading to the formation of GDP-N-formylperosamine. Is critical for full bacterial virulence. The sequence is that of GDP-perosamine N-formyltransferase from Brucella abortus (strain 2308).